The following is a 700-amino-acid chain: Elongation factor G (700 aa).

Residues 8–290 enclose the tr-type G domain; it reads ERYRNIGISA…AVIDYLPAPT (283 aa). Residues 17-24, 88-92, and 142-145 contribute to the GTP site; these read AHIDAGKT, DTPGH, and NKMD.

It belongs to the TRAFAC class translation factor GTPase superfamily. Classic translation factor GTPase family. EF-G/EF-2 subfamily.

Its subcellular location is the cytoplasm. Its function is as follows. Catalyzes the GTP-dependent ribosomal translocation step during translation elongation. During this step, the ribosome changes from the pre-translocational (PRE) to the post-translocational (POST) state as the newly formed A-site-bound peptidyl-tRNA and P-site-bound deacylated tRNA move to the P and E sites, respectively. Catalyzes the coordinated movement of the two tRNA molecules, the mRNA and conformational changes in the ribosome. The protein is Elongation factor G of Glaesserella parasuis serovar 5 (strain SH0165) (Haemophilus parasuis).